The sequence spans 490 residues: Bifunctional protein HldE (490 aa).

The interval 1-330 (MLDFEQLSPA…RKILPHAFLA (330 aa)) is ribokinase. 205–208 (NRKE) is a binding site for ATP. The active site involves Asp275. Residues 358–490 (FTNGCFDILH…LVARAQNGKS (133 aa)) are cytidylyltransferase.

This sequence in the N-terminal section; belongs to the carbohydrate kinase PfkB family. The protein in the C-terminal section; belongs to the cytidylyltransferase family. As to quaternary structure, homodimer.

It catalyses the reaction D-glycero-beta-D-manno-heptose 7-phosphate + ATP = D-glycero-beta-D-manno-heptose 1,7-bisphosphate + ADP + H(+). It carries out the reaction D-glycero-beta-D-manno-heptose 1-phosphate + ATP + H(+) = ADP-D-glycero-beta-D-manno-heptose + diphosphate. Its pathway is nucleotide-sugar biosynthesis; ADP-L-glycero-beta-D-manno-heptose biosynthesis; ADP-L-glycero-beta-D-manno-heptose from D-glycero-beta-D-manno-heptose 7-phosphate: step 1/4. The protein operates within nucleotide-sugar biosynthesis; ADP-L-glycero-beta-D-manno-heptose biosynthesis; ADP-L-glycero-beta-D-manno-heptose from D-glycero-beta-D-manno-heptose 7-phosphate: step 3/4. Its function is as follows. Catalyzes the phosphorylation of D-glycero-D-manno-heptose 7-phosphate at the C-1 position to selectively form D-glycero-beta-D-manno-heptose-1,7-bisphosphate. Functionally, catalyzes the ADP transfer from ATP to D-glycero-beta-D-manno-heptose 1-phosphate, yielding ADP-D-glycero-beta-D-manno-heptose. The sequence is that of Bifunctional protein HldE from Rhodopseudomonas palustris (strain BisA53).